We begin with the raw amino-acid sequence, 974 residues long: Villin-4 (974 aa).

Gelsolin-like repeat units lie at residues 29–79 (FIPT…DEAG), 150–190 (VHVK…QERA), 262–305 (GQAN…DDRK), 394–451 (LQVW…EERG), 532–572 (MQAI…TDQE), and 634–675 (LKVT…KNKL). The tract at residues 738-783 (VKNGGTPVADKPKRRTPASYGGRASVPDKSQQRSRSMSFSPDRVRV) is disordered. Ser777 and Ser787 each carry phosphoserine. 2 disordered regions span residues 801 to 833 (NARN…APKS) and 845 to 930 (KIPP…PVSD). Residues 824–833 (SSKFAPAPKS) are compositionally biased toward low complexity. Basic and acidic residues predominate over residues 872–887 (NSKEQEEKKENDKEEG). Polar residues predominate over residues 888–898 (SMSSRIESLTI). Ser890 is modified (phosphoserine). The HP domain maps to 909–974 (EEDLPAHPYD…NKFKMAVQLF (66 aa)). The span at 912–921 (LPAHPYDRLK) shows a compositional bias: basic and acidic residues.

This sequence belongs to the villin/gelsolin family. In terms of tissue distribution, preferentially expressed in vegetative tissues. Detected in the whole seedling, hypocotyl, cotyledon, primary root, roots hair cells and trichomes. Expressed in flowers but not in the silique.

It localises to the cytoplasm. It is found in the cytoskeleton. In terms of biological role, binds actin and actin filament bundles in a Ca(2+)-insensitive manner, but caps the barbed end of actin filaments and is able to sever them in a calcium-dependent manner. Involved in root hair growth through regulating actin organization in a Ca(2+)-dependent manner. This Arabidopsis thaliana (Mouse-ear cress) protein is Villin-4.